A 176-amino-acid chain; its full sequence is Odorant-binding protein 2a (176 aa).

The N-terminal stretch at 1 to 19 (MKSLLLTILLLGLVAVLKA) is a signal peptide. Asn42 and Asn124 each carry an N-linked (GlcNAc...) asparagine glycan. A disulfide bridge connects residues Cys79 and Cys172.

The protein belongs to the calycin superfamily. Lipocalin family. In terms of tissue distribution, expressed in the liver (at protein level). Expressed in epididymis.

It is found in the secreted. Involved in the regulation of systematic glucose homeostasis and insulin sensitivity. Involved in the regulation of liver lipid levels by positive regulation of hepatic lipogenesis and negative regulation of fatty acid beta-oxidation; via downstream transcriptional regulation of CPT1A and hepatic lipogenic program gene expression. May regulate hepatic lipogenesis and fatty acid beta-oxidation in an autocrine or paracrine manner. This is Odorant-binding protein 2a (Obp2a) from Mus musculus (Mouse).